A 294-amino-acid chain; its full sequence is Bifunctional protein FolD (294 aa).

NADP(+) contacts are provided by residues 171–173 (GRS), serine 196, and isoleucine 237.

The protein belongs to the tetrahydrofolate dehydrogenase/cyclohydrolase family. As to quaternary structure, homodimer.

The enzyme catalyses (6R)-5,10-methylene-5,6,7,8-tetrahydrofolate + NADP(+) = (6R)-5,10-methenyltetrahydrofolate + NADPH. It carries out the reaction (6R)-5,10-methenyltetrahydrofolate + H2O = (6R)-10-formyltetrahydrofolate + H(+). It functions in the pathway one-carbon metabolism; tetrahydrofolate interconversion. In terms of biological role, catalyzes the oxidation of 5,10-methylenetetrahydrofolate to 5,10-methenyltetrahydrofolate and then the hydrolysis of 5,10-methenyltetrahydrofolate to 10-formyltetrahydrofolate. The protein is Bifunctional protein FolD of Synechocystis sp. (strain ATCC 27184 / PCC 6803 / Kazusa).